Here is a 738-residue protein sequence, read N- to C-terminus: Outer membrane protein assembly factor BamA (738 aa).

Residues 1–13 form the signal peptide; that stretch reads MVWLLFLSSFCFA. POTRA domains follow at residues 14 to 81, 82 to 159, 162 to 248, 251 to 329, and 332 to 404; these read DEVV…LQEN, PILR…VKEA, TVIR…LKEG, YSFG…VVST, and YRIR…VKER.

This sequence belongs to the BamA family. As to quaternary structure, part of the Bam complex.

It is found in the cell outer membrane. Part of the outer membrane protein assembly complex, which is involved in assembly and insertion of beta-barrel proteins into the outer membrane. In Neorickettsia risticii (strain Illinois), this protein is Outer membrane protein assembly factor BamA.